A 369-amino-acid polypeptide reads, in one-letter code: 3-dehydroquinate synthase (369 aa).

NAD(+) contacts are provided by residues D75–K80, G109–D113, T133–T134, K146, K155, and T173–T176. Positions 188, 251, and 268 each coordinate Zn(2+).

The protein belongs to the sugar phosphate cyclases superfamily. Dehydroquinate synthase family. The cofactor is Co(2+). Zn(2+) is required as a cofactor. It depends on NAD(+) as a cofactor.

The protein resides in the cytoplasm. The enzyme catalyses 7-phospho-2-dehydro-3-deoxy-D-arabino-heptonate = 3-dehydroquinate + phosphate. Its pathway is metabolic intermediate biosynthesis; chorismate biosynthesis; chorismate from D-erythrose 4-phosphate and phosphoenolpyruvate: step 2/7. Functionally, catalyzes the conversion of 3-deoxy-D-arabino-heptulosonate 7-phosphate (DAHP) to dehydroquinate (DHQ). In Legionella pneumophila (strain Corby), this protein is 3-dehydroquinate synthase.